Here is a 403-residue protein sequence, read N- to C-terminus: 4-hydroxyphenylpyruvate dioxygenase (403 aa).

VOC domains are found at residues 25-169 (GYDH…LVER) and 201-359 (RIDH…LFTK). Residues histidine 204, histidine 287, and glutamate 370 each contribute to the Fe cation site.

This sequence belongs to the 4HPPD family. Homodimer. Requires Fe cation as cofactor.

It carries out the reaction 3-(4-hydroxyphenyl)pyruvate + O2 = homogentisate + CO2. The protein operates within amino-acid degradation; L-phenylalanine degradation; acetoacetate and fumarate from L-phenylalanine: step 3/6. 4-hydroxyphenylpyruvate dioxygenase; part of the L-tyrosine degradation gene cluster that mediates the biosynthesis of the brownish pigment pyomelanin as an alternative melanin. The 4-hydroxyphenylpyruvate dioxygenase hppD catalyzes the conversion of 4-hydroxyphenylpyruvate to homogentisic acid (HGA). The protein hmgX is crucial for this conversion and thus, probably functions as an accessory factor to mediate specific activity of hppD. The homogentisate 1,2-dioxygenase hmgA is then involved in the cleavage of the aromatic ring of HGA and its conversion to 4-maleylacetoacetate. When hmgA activity is lowered by the cell wall integrity (CWI) signaling pathway, HGA accumulates and leads to the production of pyomelanin through benzoquinone acetic acid after oxidation and polymerization. On the opposite, in non-stress conditions, both hppD and hmgA activities are balanced and HGA is degraded into 4-maleylacetoacetate. 4-maleylacetoacetate is further converted to 4-fumarylacetoacetate by the maleylacetoacetate isomerase maiA, which is degraded into fumarate and acetoacetate by the fumarylacetoacetase fahA. This chain is 4-hydroxyphenylpyruvate dioxygenase, found in Aspergillus fumigatus (strain ATCC MYA-4609 / CBS 101355 / FGSC A1100 / Af293) (Neosartorya fumigata).